The sequence spans 526 residues: Peptide chain release factor 3 (526 aa).

A tr-type G domain is found at 9–277 (DKRRTFAIIS…GIVEWAPKPL (269 aa)). GTP-binding positions include 18–25 (SHPDAGKT), 86–90 (DTPGH), and 140–143 (NKLD).

Belongs to the TRAFAC class translation factor GTPase superfamily. Classic translation factor GTPase family. PrfC subfamily.

Its subcellular location is the cytoplasm. Its function is as follows. Increases the formation of ribosomal termination complexes and stimulates activities of RF-1 and RF-2. It binds guanine nucleotides and has strong preference for UGA stop codons. It may interact directly with the ribosome. The stimulation of RF-1 and RF-2 is significantly reduced by GTP and GDP, but not by GMP. This is Peptide chain release factor 3 from Shewanella sp. (strain ANA-3).